A 157-amino-acid chain; its full sequence is Large ribosomal subunit protein uL22 (157 aa).

This sequence belongs to the universal ribosomal protein uL22 family. Part of the 50S ribosomal subunit.

Its function is as follows. This protein binds specifically to 23S rRNA. It makes multiple contacts with different domains of the 23S rRNA in the assembled 50S subunit and ribosome. Functionally, the globular domain of the protein is located near the polypeptide exit tunnel on the outside of the subunit, while an extended beta-hairpin is found that lines the wall of the exit tunnel in the center of the 70S ribosome. The sequence is that of Large ribosomal subunit protein uL22 from Staphylothermus marinus (strain ATCC 43588 / DSM 3639 / JCM 9404 / F1).